Consider the following 229-residue polypeptide: Large ribosomal subunit protein uL1 (229 aa).

It belongs to the universal ribosomal protein uL1 family. In terms of assembly, part of the 50S ribosomal subunit.

Its function is as follows. Binds directly to 23S rRNA. The L1 stalk is quite mobile in the ribosome, and is involved in E site tRNA release. Protein L1 is also a translational repressor protein, it controls the translation of the L11 operon by binding to its mRNA. The chain is Large ribosomal subunit protein uL1 from Clostridium perfringens (strain ATCC 13124 / DSM 756 / JCM 1290 / NCIMB 6125 / NCTC 8237 / Type A).